Consider the following 553-residue polypeptide: Telomere repeat-binding protein 2 (553 aa).

The interval 147–170 (SSTEVGACGNGSPNESRDDVNLFS) is disordered. Residues 285–364 (VKLRIKSFRV…HLDSLGFSLE (80 aa)) form the Ubiquitin-like domain. A disordered region spans residues 394 to 413 (ALDSSHEPEPSPADSFGKLG). One can recognise an HTH myb-type domain in the interval 448 to 507 (AQRRIRRPFSVTEVEALVQAVEKLGTGRWRDVKVRAFEDADHRTYVDLKDKWKTLVHTAR). Positions 476–503 (WRDVKVRAFEDADHRTYVDLKDKWKTLV) form a DNA-binding region, H-T-H motif.

In terms of assembly, homodimer and heterodimer with TRP1. Interacts with SNL1. As to expression, expressed ubiquitously. Highest expression in flowers and leaves.

The protein localises to the nucleus. In terms of biological role, binds specifically to the plant telomeric double-stranded DNA sequences. At least 2 repeats of telomeric sequences are required for binding. Induces DNA bending. This is Telomere repeat-binding protein 2 (TRP2) from Arabidopsis thaliana (Mouse-ear cress).